Consider the following 348-residue polypeptide: Protein RecA (348 aa).

66 to 73 is an ATP binding site; it reads GPESSGKT.

This sequence belongs to the RecA family.

It is found in the cytoplasm. Functionally, can catalyze the hydrolysis of ATP in the presence of single-stranded DNA, the ATP-dependent uptake of single-stranded DNA by duplex DNA, and the ATP-dependent hybridization of homologous single-stranded DNAs. It interacts with LexA causing its activation and leading to its autocatalytic cleavage. This chain is Protein RecA, found in Neisseria meningitidis serogroup B (strain ATCC BAA-335 / MC58).